Consider the following 91-residue polypeptide: DNA-directed RNA polymerase subunit omega (91 aa).

This sequence belongs to the RNA polymerase subunit omega family. The RNAP catalytic core consists of 2 alpha, 1 beta, 1 beta' and 1 omega subunit. When a sigma factor is associated with the core the holoenzyme is formed, which can initiate transcription.

The enzyme catalyses RNA(n) + a ribonucleoside 5'-triphosphate = RNA(n+1) + diphosphate. In terms of biological role, promotes RNA polymerase assembly. Latches the N- and C-terminal regions of the beta' subunit thereby facilitating its interaction with the beta and alpha subunits. The chain is DNA-directed RNA polymerase subunit omega from Serratia proteamaculans (strain 568).